The primary structure comprises 92 residues: Small ribosomal subunit protein uS19 (92 aa).

The protein belongs to the universal ribosomal protein uS19 family.

Its function is as follows. Protein S19 forms a complex with S13 that binds strongly to the 16S ribosomal RNA. In Vibrio atlanticus (strain LGP32) (Vibrio splendidus (strain Mel32)), this protein is Small ribosomal subunit protein uS19.